Consider the following 905-residue polypeptide: MSASVSATTAHHGLPAHEVVLLLESDPYHGLSDGEAAQRLERFGPNTLAVVTRASLLARILRQFHHPLIYVLLVAGTITAGLKEFVDAAVIFGVVVINAIVGFIQESKAEAALQGLRSMVHTHAKVVREGHEHTMPSEELVPGDLVLLAAGDKVPADLRLVRQTGLSVNESALTGESTPVHKDEVALPEGTPVADRRNIAYSGTLVTAGHGAGIVVATGAETELGEIHRLVGAAEVVATPLTAKLAWFSKFLTIAILGLAALTFGVGLLRRQDAVETFTAAIALAVGAIPEGLPTAVTITLAIGMARMAKRRAVIRRLPAVETLGSTTVICADKTGTLTENQMTVQSIWTPHGEIRATGTGYAPDVLLCDTDDAPVPVNANAALRWSLLAGACSNDAALVRDGTRWQIVGDPTEGAMLVVAAKAGFNPERLATTLPQVAAIPFSSERQYMATLHRDGTDHVVLAKGAVERMLDLCGTEMGADGALRPLDRATVLRATEMLTSRGLRVLATGMGAGAGTPDDFDENVIPGSLALTGLQAMSDPPRAAAASAVAACHSAGIAVKMITGDHAGTATAIATEVGLLDNTEPAAGSVLTGAELAALSADQYPEAVDTASVFARVSPEQKLRLVQALQARGHVVAMTGDGVNDAPALRQANIGVAMGRGGTEVAKDAADMVLTDDDFATIEAAVEEGRGVFDNLTKFITWTLPTNLGEGLVILAAIAVGVALPILPTQILWINMTTAIALGLMLAFEPKEAGIMTRPPRDPDQPLLTGWLVRRTLLVSTLLVASAWWLFAWELDNGAGLHEARTAALNLFVVVEAFYLFSCRSLTRSAWRLGMFANRWIILGVSAQAIAQFAITYLPAMNMVFDTAPIDIGVWVRIFAVATAITIVVATDTLLPRIRAQPP.

Transmembrane regions (helical) follow at residues 84-104, 248-268, and 283-303; these read EFVD…VGFI, FSKF…GVGL, and ALAV…TLAI. The active-site 4-aspartylphosphate intermediate is Asp-333. Residues Asp-643 and Asp-647 each contribute to the Mg(2+) site. 6 helical membrane passes run 716 to 736, 738 to 758, 778 to 798, 808 to 828, 842 to 862, and 872 to 892; these read ILAA…ILWI, MTTA…AGIM, TLLV…WELD, TAAL…CRSL, WIIL…YLPA, and IDIG…IVVA.

It belongs to the cation transport ATPase (P-type) (TC 3.A.3) family. Type IIA subfamily.

The protein resides in the cell membrane. The catalysed reaction is ATP + H2O = ADP + phosphate + H(+). This is Probable cation-transporting ATPase F (ctpF) from Mycobacterium bovis (strain ATCC BAA-935 / AF2122/97).